Consider the following 171-residue polypeptide: Adenine phosphoribosyltransferase (171 aa).

It belongs to the purine/pyrimidine phosphoribosyltransferase family. Homodimer.

The protein localises to the cytoplasm. It catalyses the reaction AMP + diphosphate = 5-phospho-alpha-D-ribose 1-diphosphate + adenine. It functions in the pathway purine metabolism; AMP biosynthesis via salvage pathway; AMP from adenine: step 1/1. Its function is as follows. Catalyzes a salvage reaction resulting in the formation of AMP, that is energically less costly than de novo synthesis. The polypeptide is Adenine phosphoribosyltransferase (Mesomycoplasma hyopneumoniae (strain 232) (Mycoplasma hyopneumoniae)).